A 99-amino-acid polypeptide reads, in one-letter code: DNA-binding protein HmvA (99 aa).

Residues 52–55 are interaction with DNA; it reads KTIK.

It belongs to the archaeal histone HMF family. In terms of assembly, homodimer or heterodimer with another histone. Dimers then assemble into higher oligomers, with the DNA wrapped around the protein core.

Its subcellular location is the cytoplasm. The protein localises to the chromosome. In terms of biological role, binds and compact DNA (95 to 150 base pairs) to form nucleosome-like structures that contain positive DNA supercoils. Increases the resistance of DNA to thermal denaturation (in vitro). The sequence is that of DNA-binding protein HmvA (hmvA) from Methanococcus voltae.